A 501-amino-acid chain; its full sequence is Glycerol kinase (501 aa).

ADP is bound at residue Thr-17. The ATP site is built by Thr-17, Thr-18, and Ser-19. Thr-17 contributes to the sn-glycerol 3-phosphate binding site. Position 21 (Arg-21) interacts with ADP. Sn-glycerol 3-phosphate-binding residues include Arg-87, Glu-88, Tyr-139, and Asp-243. Glycerol contacts are provided by Arg-87, Glu-88, Tyr-139, Asp-243, and Gln-244. ADP-binding residues include Thr-265 and Gly-308. ATP is bound by residues Thr-265, Gly-308, Gln-312, and Gly-409. Residues Gly-409 and Asn-413 each contribute to the ADP site.

This sequence belongs to the FGGY kinase family.

It catalyses the reaction glycerol + ATP = sn-glycerol 3-phosphate + ADP + H(+). Its pathway is polyol metabolism; glycerol degradation via glycerol kinase pathway; sn-glycerol 3-phosphate from glycerol: step 1/1. Its activity is regulated as follows. Inhibited by fructose 1,6-bisphosphate (FBP). Its function is as follows. Key enzyme in the regulation of glycerol uptake and metabolism. Catalyzes the phosphorylation of glycerol to yield sn-glycerol 3-phosphate. This Pseudomonas fluorescens (strain SBW25) protein is Glycerol kinase.